We begin with the raw amino-acid sequence, 245 residues long: tRNA (guanine-N(1)-)-methyltransferase (245 aa).

Residues glycine 111 and 131-136 (MGDYVL) each bind S-adenosyl-L-methionine.

It belongs to the RNA methyltransferase TrmD family. As to quaternary structure, homodimer.

Its subcellular location is the cytoplasm. It catalyses the reaction guanosine(37) in tRNA + S-adenosyl-L-methionine = N(1)-methylguanosine(37) in tRNA + S-adenosyl-L-homocysteine + H(+). Specifically methylates guanosine-37 in various tRNAs. This chain is tRNA (guanine-N(1)-)-methyltransferase, found in Staphylococcus aureus (strain MRSA252).